Here is a 545-residue protein sequence, read N- to C-terminus: Calcium-dependent protein kinase 10 (545 aa).

The disordered stretch occupies residues 1-36 (MGNCNACVRPDSKESKPSSKPKKPNRDRKLNPFAGD). G2 carries N-myristoyl glycine lipidation. Residues 63–321 (YILGRELGRG…AQQVLAHPWI (259 aa)) enclose the Protein kinase domain. ATP-binding positions include 69-77 (LGRGEFGIT) and K92. The Proton acceptor role is filled by D187. Position 227 is a phosphoserine (S227). Residues 327 to 357 (APNVPLGDIVRSRLKQFSMMNRFKKKVLRVI) form an autoinhibitory domain region. EF-hand domains lie at 364–399 (QEVEVIKNMFSLMDDDKDGKITYPELKAGLQKVGSQ), 400–435 (LGEPEIKMLMEVADVDGNGFLDYGEFVAVIIHLQKI), 436–471 (ENDELFKLAFMFFDKDGSTYIELDELREALADELGE), and 472–507 (PDASVLSDIMREVDTDKDGRINYDEFVTMMKAGTDW). Positions 377, 379, 381, 383, 388, 413, 415, 417, 424, 449, 451, 453, 455, 460, 485, 487, 489, 491, and 496 each coordinate Ca(2+).

The protein belongs to the protein kinase superfamily. Ser/Thr protein kinase family. CDPK subfamily.

It is found in the membrane. The catalysed reaction is L-seryl-[protein] + ATP = O-phospho-L-seryl-[protein] + ADP + H(+). It catalyses the reaction L-threonyl-[protein] + ATP = O-phospho-L-threonyl-[protein] + ADP + H(+). Its activity is regulated as follows. Activated by calcium. Autophosphorylation may play an important role in the regulation of the kinase activity. Functionally, may play a role in signal transduction pathways that involve calcium as a second messenger. May be a positive regulator controlling stress signal transduction. In Arabidopsis thaliana (Mouse-ear cress), this protein is Calcium-dependent protein kinase 10 (CPK10).